Consider the following 261-residue polypeptide: Caveolae-associated protein 3 (261 aa).

An interaction with CAVIN1 region spans residues 1-84 (MRESALERGP…SNTLAQLLAK (84 aa)). Residues 20-78 (VHAVTVVTLLEKLASMLETLRERQGGLARRQGGLAGSVRRIQSGLGALSRSHDTTSNTL) are leucine-zipper. Residues Ser-62 and Ser-70 each carry the phosphoserine modification. Lys-128 participates in a covalent cross-link: Glycyl lysine isopeptide (Lys-Gly) (interchain with G-Cter in SUMO2). The interaction with CAV1 stretch occupies residues 135 to 203 (ASAFQKAPEP…SGRKGPAAPP (69 aa)). Positions 139-261 (QKAPEPLGPA…EALLQMESVA (123 aa)) are disordered. Residues 158-170 (LEAEVGESSDEEP) are compositionally biased toward acidic residues. Residues Ser-165, Ser-166, and Ser-173 each carry the phosphoserine modification. A compositionally biased stretch (pro residues) spans 200 to 212 (AAPPPTPVKPPRL). The span at 213 to 231 (GPGRSAEAQPEAQPALEPT) shows a compositional bias: low complexity.

The protein belongs to the CAVIN family. As to quaternary structure, component of the CAVIN complex composed of CAVIN1, CAVIN2, CAVIN3 and CAVIN4. Interacts with PRKCD and with phosphatidylserine. Phosphatidylserine may form a bridge between PKC and PKC-binding partners and stabilize the binding. Interacts with PER2. Interacts with CAVIN1. Interacts (via leucine-zipper domain) with CAV1 in a cholesterol-sensitive manner. Interacts with EPS15L1. Post-translationally, in vitro, phosphorylated by PRKCD. In terms of tissue distribution, skeletal muscle, liver, stomach, lung, kidney and heart (at protein level). Strongly expressed in mammary and epithelial cells.

The protein resides in the cytoplasm. It is found in the membrane. Its subcellular location is the caveola. The protein localises to the cytosol. Functionally, regulates the traffic and/or budding of caveolae. Plays a role in caveola formation in a tissue-specific manner. Required for the formation of caveolae in smooth muscle but not in the lung and heart endothelial cells. Regulates the equilibrium between cell surface-associated and cell surface-dissociated caveolae by promoting the rapid release of caveolae from the cell surface. Plays a role in the regulation of the circadian clock. Modulates the period length and phase of circadian gene expression and also regulates expression and interaction of the core clock components PER1/2 and CRY1/2. This chain is Caveolae-associated protein 3, found in Homo sapiens (Human).